We begin with the raw amino-acid sequence, 2077 residues long: Large tegument protein deneddylase (2077 aa).

The interval 1-231 (MKIITSSTNQ…PDIAIALDKF (231 aa)) is deubiquitination activity. The Peptidase C76 domain occupies 3 to 221 (IITSSTNQND…ELLILKTYKD (219 aa)). Catalysis depends on residues Cys-23, Asp-156, and His-158. A region of interest (interaction with inner tegument protein) is located at residue Ser-287. Residues 1982–2004 (PPNNTESTRPGKQTSETLTNKNL) form a disordered region.

It belongs to the herpesviridae large tegument protein family. Interacts with host CUL1 and CUL4A; these interactions inhibit the E3 ligase activity of cullins. Interacts with inner tegument protein. Interacts with capsid vertex specific component CVC2. Interacts with the major capsid protein/MCP.

It is found in the virion tegument. The protein resides in the host cytoplasm. It localises to the host nucleus. It catalyses the reaction Thiol-dependent hydrolysis of ester, thioester, amide, peptide and isopeptide bonds formed by the C-terminal Gly of ubiquitin (a 76-residue protein attached to proteins as an intracellular targeting signal).. Functionally, large tegument protein that plays multiple roles in the viral cycle. During viral entry, remains associated with the capsid while most of the tegument is detached and participates in the capsid transport toward the host nucleus. Plays a role in the routing of the capsid at the nuclear pore complex and subsequent uncoating. Within the host nucleus, acts as a deneddylase and promotes the degradation of nuclear CRLs (cullin-RING ubiquitin ligases) and thereby stabilizes nuclear CRL substrates, while cytoplasmic CRLs remain unaffected. These modifications prevent host cell cycle S-phase progression and create a favorable environment allowing efficient viral genome replication. Participates later in the secondary envelopment of capsids. Indeed, plays a linker role for the association of the outer viral tegument to the capsids together with the inner tegument protein. The sequence is that of Large tegument protein deneddylase (U31) from Homo sapiens (Human).